An 81-amino-acid polypeptide reads, in one-letter code: Photosystem I iron-sulfur center (81 aa).

2 consecutive 4Fe-4S ferredoxin-type domains span residues S2–W31 and G37–Y68. [4Fe-4S] cluster is bound by residues C11, C14, C17, C21, C48, C51, C54, and C58.

As to quaternary structure, the eukaryotic PSI reaction center is composed of at least 11 subunits. [4Fe-4S] cluster serves as cofactor.

It localises to the plastid. The protein resides in the chloroplast thylakoid membrane. It carries out the reaction reduced [plastocyanin] + hnu + oxidized [2Fe-2S]-[ferredoxin] = oxidized [plastocyanin] + reduced [2Fe-2S]-[ferredoxin]. Functionally, apoprotein for the two 4Fe-4S centers FA and FB of photosystem I (PSI); essential for photochemical activity. FB is the terminal electron acceptor of PSI, donating electrons to ferredoxin. The C-terminus interacts with PsaA/B/D and helps assemble the protein into the PSI complex. Required for binding of PsaD and PsaE to PSI. PSI is a plastocyanin/cytochrome c6-ferredoxin oxidoreductase, converting photonic excitation into a charge separation, which transfers an electron from the donor P700 chlorophyll pair to the spectroscopically characterized acceptors A0, A1, FX, FA and FB in turn. This is Photosystem I iron-sulfur center from Phaeodactylum tricornutum (strain CCAP 1055/1).